Reading from the N-terminus, the 217-residue chain is Probable transaldolase (217 aa).

Residue K83 is the Schiff-base intermediate with substrate of the active site.

This sequence belongs to the transaldolase family. Type 3B subfamily.

The protein localises to the cytoplasm. The catalysed reaction is D-sedoheptulose 7-phosphate + D-glyceraldehyde 3-phosphate = D-erythrose 4-phosphate + beta-D-fructose 6-phosphate. It functions in the pathway carbohydrate degradation; pentose phosphate pathway; D-glyceraldehyde 3-phosphate and beta-D-fructose 6-phosphate from D-ribose 5-phosphate and D-xylulose 5-phosphate (non-oxidative stage): step 2/3. Transaldolase is important for the balance of metabolites in the pentose-phosphate pathway. This is Probable transaldolase from Rhizorhabdus wittichii (strain DSM 6014 / CCUG 31198 / JCM 15750 / NBRC 105917 / EY 4224 / RW1) (Sphingomonas wittichii).